The following is an 834-amino-acid chain: Pentatricopeptide repeat-containing protein At4g39530 (834 aa).

PPR repeat units follow at residues 78–112 (DTYLSNILINLYSRAGGMVYARKVFEKMPERNLVS), 113–144 (WSTMVSACNHHGIYEESLVVFLEFWRTRKDSP), 145–181 (NEYILSSFIQACSGLDGRGRWMVFQLQSFLVKSGFDR), 182–212 (DVYVGTLLIDFYLKDGNIDYARLVFDALPEK), 213–247 (STVTWTTMISGCVKMGRSYVSLQLFYQLMEDNVVP), 248–282 (DGYILSTVLSACSILPFLEGGKQIHAHILRYGLEM), 283–313 (DASLMNVLIDSYVKCGRVIAAHKLFNGMPNK), 314–348 (NIISWTTLLSGYKQNALHKEAMELFTSMSKFGLKP), 349–383 (DMYACSSILTSCASLHALGFGTQVHAYTIKANLGN), 384–414 (DSYVTNSLIDMYAKCDCLTDARKVFDIFAAA), 415–452 (DVVLFNAMIEGYSRLGTQWELHEALNIFRDMRFRLIRP), 453–487 (SLLTFVSLLRASASLTSLGLSKQIHGLMFKYGLNL), 488–518 (DIFAGSALIDVYSNCYCLKDSRLVFDEMKVK), 519–553 (DLVIWNSMFAGYVQQSENEEALNLFLELQLSRERP), 554–588 (DEFTFANMVTAAGNLASVQLGQEFHCQLLKRGLEC), 589–619 (NPYITNALLDMYAKCGSPEDAHKAFDSAASR), 620–654 (DVVCWNSVISSYANHGEGKKALQMLEKMMSEGIEP), 655–689 (NYITFVGVLSACSHAGLVEDGLKQFELMLRFGIEP), and 690–720 (ETEHYVCMVSLLGRAGRLNKARELIEKMPTK). The type E motif stretch occupies residues 725–800 (VWRSLLSGCA…EPGRSWIGIN (76 aa)). The tract at residues 801–831 (KEVHIFLSKDKSHCKANQIYEVLDDLLVQIR) is type E(+) motif.

The protein belongs to the PPR family. PCMP-E subfamily.

The polypeptide is Pentatricopeptide repeat-containing protein At4g39530 (PCMP-E52) (Arabidopsis thaliana (Mouse-ear cress)).